The following is a 190-amino-acid chain: Guanylate kinase (190 aa).

Residues 3 to 185 (NYIFIISAPS…SLEQLCKYFE (183 aa)) form the Guanylate kinase-like domain. 10 to 17 (APSGAGKS) is an ATP binding site.

This sequence belongs to the guanylate kinase family.

The protein localises to the cytoplasm. It carries out the reaction GMP + ATP = GDP + ADP. Its function is as follows. Essential for recycling GMP and indirectly, cGMP. The sequence is that of Guanylate kinase from Francisella tularensis subsp. holarctica (strain OSU18).